Here is a 311-residue protein sequence, read N- to C-terminus: Replicative helicase loader DnaI (311 aa).

Residues 1–136 are N-terminal domain (Nd); sequence MEPIGRSLQG…LGATFQQVDI (136 aa). The Zn(2+) site is built by cysteine 67, cysteine 70, histidine 84, and cysteine 101. Positions 137 to 311 are C-terminal domain (Cd); it reads SDPSRLAMFQ…RLDGENRRHP (175 aa). Residue 168–175 participates in ATP binding; the sequence is GKFGVGKT.

This sequence belongs to the DnaI family. The DNA replisome assembles sequentially on oriC in this order; DnaA, DnaD, DnaB, DnaI-DnaC helicase. Monomer with a very minor amount of dimer in solution. Interacts with replicative helicase (from G.stearothermophilus, called DnaB); this interaction is disrupted by DnaD. Interacts with replicative helicase DnaC, forms a DnaC(6):DnaI(6) complex. Interacts with the helicase as 3 dimers. A stable complex with DnaG primase, DnaI(6):helicase(6):DnaG(3) fragment can be isolated; DnaI and DnaG do not contact each other (helicase and DnaG in this complex are derived from G.stearothermophilus). Requires Zn(2+) as cofactor.

It is found in the cytoplasm. It carries out the reaction ATP + H2O = ADP + phosphate + H(+). Its function is as follows. Helps load the DnaC replicative helicase onto single-stranded (ss)DNA and simulates the helicase activity; in the presence of DnaB more helicase activity is seen. Regulates DnaC helicase activity, at low concentrations stimulates the DNA helicase and ATPase activities of DnaC. Has no measurable ATPase activity after 1 hour incubation of 6 uM DnaI with or without DNA. Another group has found the protein has weak ATPase activity that is not stimulated by ssDNA. Whole protein binds forked DNA (but not ssDNA) weakly; ATP and ADPNP (probably 5'-adenylyl beta, gamma-imidodiphosphate) have no effect on DNA binding. DnaB, DnaD and DnaI may be required for a PriA-independent pathway of replication fork restart. This chain is Replicative helicase loader DnaI, found in Bacillus subtilis (strain 168).